The primary structure comprises 2833 residues: Reticulocyte-binding protein 1 (2833 aa).

A signal peptide spans 1 to 22 (MKRGICLAALLCLFNYLGAGHG). Basic and acidic residues predominate over residues 75–91 (ETDNASGKDAEGSRPSH). Disordered regions lie at residues 75-95 (ETDNASGKDAEGSRPSHDSSF), 112-133 (HVKESTPHSTTRESTEKGKENE), and 819-860 (KHKQ…NFSR). Basic and acidic residues predominate over residues 819–836 (KHKQNRSEKEEEYFKNES). Positions 837–849 (VEEDLSREETEEQ) are enriched in acidic residues. A Cell attachment site motif is present at residues 2563-2565 (RGD). Residues 2619–2755 (EMNSKKSAIE…GTYQDTSNSS (137 aa)) form a disordered region. Composition is skewed to basic and acidic residues over residues 2621-2633 (NSKKSAIEKEKTA) and 2640-2652 (ENNRREEEERARV). The span at 2655 to 2670 (MSMNNDPTQSETTHSE) shows a compositional bias: polar residues. Residues 2706–2720 (LEEEETTAPMEETEM) show a composition bias toward acidic residues. Basic and acidic residues predominate over residues 2731–2742 (TRSDEPDMHTEN). The span at 2743 to 2755 (TQDGTYQDTSNSS) shows a compositional bias: polar residues.

In terms of assembly, homodimer.

It is found in the membrane. Functionally, involved in reticulocyte adhesion. Specifically binds to human reticulocyte cells. The polypeptide is Reticulocyte-binding protein 1 (RBP1) (Plasmodium vivax (strain Belem)).